Consider the following 465-residue polypeptide: Iron-sulfur cluster assembly SufBD family protein SAR0880 (465 aa).

The protein belongs to the iron-sulfur cluster assembly SufBD family.

The protein is Iron-sulfur cluster assembly SufBD family protein SAR0880 of Staphylococcus aureus (strain MRSA252).